Here is a 117-residue protein sequence, read N- to C-terminus: MSNIIKALEDEQLKQDLPKFAPGDTVVVQVKVKEGDRERLQAFEGVVIAIRNRGLHSAFTVRKISNGEGVERTFQTHSPVVNSIEVKRRGAVRRAKLYYLRERSGKSARIKEKLAKK.

Belongs to the bacterial ribosomal protein bL19 family.

Functionally, this protein is located at the 30S-50S ribosomal subunit interface and may play a role in the structure and function of the aminoacyl-tRNA binding site. In Aliivibrio fischeri (strain ATCC 700601 / ES114) (Vibrio fischeri), this protein is Large ribosomal subunit protein bL19.